Reading from the N-terminus, the 147-residue chain is Large ribosomal subunit protein uL16 (147 aa).

The span at 1–16 shows a compositional bias: basic residues; it reads MLMPKRVKRRRVHRGR. The disordered stretch occupies residues 1 to 20; sequence MLMPKRVKRRRVHRGRMTGQ.

Belongs to the universal ribosomal protein uL16 family. In terms of assembly, part of the 50S ribosomal subunit.

Binds 23S rRNA and is also seen to make contacts with the A and possibly P site tRNAs. The sequence is that of Large ribosomal subunit protein uL16 from Alkaliphilus metalliredigens (strain QYMF).